A 95-amino-acid polypeptide reads, in one-letter code: Cell division protein FtsB (95 aa).

Over 1–3 (MRW) the chain is Cytoplasmic. Residues 4–21 (VLAGLTALLLWLQGLLWF) form a helical membrane-spanning segment. Topologically, residues 22–95 (GEGGLNDVRG…QIIEREDDAR (74 aa)) are periplasmic. Positions 26–76 (LNDVRGLSRSVEAQREEVDRLRQRNQALEAEVNDLKTGLEALEERARSELG) form a coiled coil.

The protein belongs to the FtsB family. Part of a complex composed of FtsB, FtsL and FtsQ.

Its subcellular location is the cell inner membrane. In terms of biological role, essential cell division protein. May link together the upstream cell division proteins, which are predominantly cytoplasmic, with the downstream cell division proteins, which are predominantly periplasmic. The chain is Cell division protein FtsB from Alkalilimnicola ehrlichii (strain ATCC BAA-1101 / DSM 17681 / MLHE-1).